We begin with the raw amino-acid sequence, 236 residues long: Ribose-5-phosphate isomerase A (236 aa).

Residues 29–32 (SGST), 86–89 (DGAD), and 99–102 (KGGG) each bind substrate. The Proton acceptor role is filled by E108. Position 126 (K126) interacts with substrate.

The protein belongs to the ribose 5-phosphate isomerase family. Homodimer.

It carries out the reaction aldehydo-D-ribose 5-phosphate = D-ribulose 5-phosphate. It functions in the pathway carbohydrate degradation; pentose phosphate pathway; D-ribose 5-phosphate from D-ribulose 5-phosphate (non-oxidative stage): step 1/1. Its function is as follows. Catalyzes the reversible conversion of ribose-5-phosphate to ribulose 5-phosphate. This Prochlorococcus marinus (strain NATL1A) protein is Ribose-5-phosphate isomerase A.